The sequence spans 344 residues: Cytochrome c biogenesis protein CcsA (344 aa).

The next 8 helical transmembrane spans lie at 21-41 (NVAF…AAFP), 45-65 (LLSE…AALL), 80-100 (LYES…LALH), 106-126 (WVGV…ALAL), 151-171 (VMLL…AFLI), 252-272 (LIGL…VWAN), 287-307 (WALI…TKGW), and 313-333 (ALLA…VNFL).

It belongs to the CcmF/CycK/Ccl1/NrfE/CcsA family. In terms of assembly, may interact with ccs1.

The protein localises to the cellular thylakoid membrane. Functionally, required during biogenesis of c-type cytochromes (cytochrome c6 and cytochrome f) at the step of heme attachment. This chain is Cytochrome c biogenesis protein CcsA, found in Synechococcus sp. (strain JA-3-3Ab) (Cyanobacteria bacterium Yellowstone A-Prime).